Here is a 495-residue protein sequence, read N- to C-terminus: Dipeptide and tripeptide permease B (495 aa).

The Cytoplasmic portion of the chain corresponds to 1 to 16; sequence MDNKVSILNQPKPFKM. A helical transmembrane segment spans residues 17 to 37; that stretch reads IFFIELWERFGYYGLQGILAV. At 38–50 the chain is on the periplasmic side; it reads YFVDKLGFSMQDS. A helical membrane pass occupies residues 51-71; it reads FVTFGAFAALVYGLVSVGGYV. Over 72–80 the chain is Cytoplasmic; the sequence is GDYVLGTKR. Residues 81–101 traverse the membrane as a helical segment; that stretch reads TMVFGAVVLALGYFLMGFSIL. Residues 102–104 lie on the Periplasmic side of the membrane; it reads NPN. Residues 105–125 form a helical membrane-spanning segment; sequence FIYVALGAIAVGNGLFKANPS. Residues 126-144 lie on the Cytoplasmic side of the membrane; the sequence is SLLAKCYEKGDSRLDGAFT. The chain crosses the membrane as a helical span at residues 145 to 165; it reads LYYMSINIGSLVSLSISPVIA. Over 166 to 170 the chain is Periplasmic; that stretch reads NNYGY. The helical transmembrane segment at 171 to 191 threads the bilayer; it reads EYAFIICGLGLIASLFSYFSL. Topologically, residues 192–209 are cytoplasmic; the sequence is RSTVQGIGSEPDALPLNK. A helical transmembrane segment spans residues 210-230; the sequence is TKALIVLIGTIASTLVCAWLL. A topological domain (periplasmic) is located at residue Gln231. Residues 232–252 form a helical membrane-spanning segment; that stretch reads NIMMANLALGLIGVGVVGFFL. Over 253-265 the chain is Cytoplasmic; sequence KETFKEVGEQRNK. A helical membrane pass occupies residues 266–286; sequence MIVAFILMLQAIIFYVLYAQM. Topologically, residues 287 to 309 are periplasmic; it reads PTSLNFFAINNVHSELFGMDINP. The helical transmembrane segment at 310-330 threads the bilayer; sequence VSLQALNPFWVIFCSPILAYL. At 331 to 348 the chain is on the cytoplasmic side; that stretch reads YTYYGNQNKDLSMPGKFT. The helical transmembrane segment at 349–369 threads the bilayer; it reads VGMFMCAFGFLSVAAAGNWFA. The Periplasmic portion of the chain corresponds to 370–373; it reads DQAG. The chain crosses the membrane as a helical span at residues 374 to 394; sequence MVSVWWMVLVYLFQSLGELMI. Topologically, residues 395–409 are cytoplasmic; it reads SGLGLAMVASLVPQR. A helical membrane pass occupies residues 410-430; the sequence is LMGFTMGAWFLTQAASFIIGG. At 431–454 the chain is on the periplasmic side; that stretch reads YVATFSATPEHLTDPLDTLPVYTE. Residues 455–475 traverse the membrane as a helical segment; that stretch reads LFQNIGFVTLAVAIVMAITAP. Residues 476 to 495 are Cytoplasmic-facing; sequence KLNKMMTSSQPEDAELVEQP.

This sequence belongs to the major facilitator superfamily. Proton-dependent oligopeptide transporter (POT/PTR) (TC 2.A.17) family. DtpB subfamily.

The protein resides in the cell inner membrane. Its function is as follows. Proton-dependent permease that transports di- and tripeptides. This chain is Dipeptide and tripeptide permease B, found in Aliivibrio fischeri (strain MJ11) (Vibrio fischeri).